The sequence spans 472 residues: Hepatocyte nuclear factor 3-alpha (472 aa).

Positions 169–260 (AKPPYSYISL…GNMFENGCYL (92 aa)) form a DNA-binding region, fork-head. Residues 269–392 (EKQPGAGGGG…ESQLHLKGDP (124 aa)) form a disordered region. The span at 273 to 289 (GAGGGGGSGSGGSGAKG) shows a compositional bias: gly residues. 2 positions are modified to phosphoserine: serine 307 and serine 331. Composition is skewed to low complexity over residues 322–332 (GAPAPGPAASP) and 351–366 (TPAS…GPGA).

Binds DNA as a monomer. Interacts with FOXA2. Interacts with NKX2-1. Interacts with HDAC7. Interacts with the histone H3-H4 heterodimer. Associates with nucleosomes containing histone H2A. Interacts with AR. Interacts with NR0B2. In terms of tissue distribution, highly expressed in prostate and ESR1-positive breast tumors. Overexpressed in esophageal and lung adenocarcinomas.

The protein localises to the nucleus. In terms of biological role, transcription factor that is involved in embryonic development, establishment of tissue-specific gene expression and regulation of gene expression in differentiated tissues. Is thought to act as a 'pioneer' factor opening the compacted chromatin for other proteins through interactions with nucleosomal core histones and thereby replacing linker histones at target enhancer and/or promoter sites. Binds DNA with the consensus sequence 5'-[AC]A[AT]T[AG]TT[GT][AG][CT]T[CT]-3'. Proposed to play a role in translating the epigenetic signatures into cell type-specific enhancer-driven transcriptional programs. Its differential recruitment to chromatin is dependent on distribution of histone H3 methylated at 'Lys-5' (H3K4me2) in estrogen-regulated genes. Involved in the development of multiple endoderm-derived organ systems such as liver, pancreas, lung and prostate; FOXA1 and FOXA2 seem to have at least in part redundant roles. Modulates the transcriptional activity of nuclear hormone receptors. Is involved in ESR1-mediated transcription; required for ESR1 binding to the NKX2-1 promoter in breast cancer cells; binds to the RPRM promoter and is required for the estrogen-induced repression of RPRM. Involved in regulation of apoptosis by inhibiting the expression of BCL2. Involved in cell cycle regulation by activating expression of CDKN1B, alone or in conjunction with BRCA1. Originally described as a transcription activator for a number of liver genes such as AFP, albumin, tyrosine aminotransferase, PEPCK, etc. Interacts with the cis-acting regulatory regions of these genes. Involved in glucose homeostasis. This chain is Hepatocyte nuclear factor 3-alpha (FOXA1), found in Homo sapiens (Human).